The following is a 552-amino-acid chain: Glutamine--tRNA ligase (552 aa).

Residues proline 33–histidine 43 carry the 'HIGH' region motif. ATP contacts are provided by residues glutamate 34–asparagine 36 and histidine 40–serine 46. Aspartate 66 and tyrosine 210 together coordinate L-glutamine. ATP is bound by residues threonine 229, arginine 259–leucine 260, and methionine 267–lysine 269. Positions valine 266–arginine 270 match the 'KMSKS' region motif.

This sequence belongs to the class-I aminoacyl-tRNA synthetase family. As to quaternary structure, monomer.

Its subcellular location is the cytoplasm. The enzyme catalyses tRNA(Gln) + L-glutamine + ATP = L-glutaminyl-tRNA(Gln) + AMP + diphosphate. This chain is Glutamine--tRNA ligase, found in Clostridium perfringens (strain ATCC 13124 / DSM 756 / JCM 1290 / NCIMB 6125 / NCTC 8237 / Type A).